Consider the following 418-residue polypeptide: NAQSHDNVVSIMLDTKGPEVRSGDVPQPMLKEGQEFNPTIRRGVSTQDTVSVNYDDFVNDVVVGDILLVDGGMMSLAVKSKTSDLVKCVVVDGGELKSRRHLNVRGKSARLPSITDKDWGDIKFGVDNQVDFYAVSFVKDAKVVHELKEYLKRCNADIHVIVKIESADSIPNLHSIISASDGAMVARGDLGAELPIEEVPLLQEDIIRRCHSMQKPVIVATNMLESMINHPTPTRAEVSDIAIAVREGADAVMLSGETAHGKYPLKAVRVMHTVALRTESSSPVNTTPPAQGAYKGHMGEMFAFHATIMANTLNTPIIVFTRTGSMAVLLSHYQPASTIFAFTNEERIKQRLSLYRGVMPIYMEFSSDAEETFSRALQLLLNKGLLVEGEHVTLVQSGAQPIWRQESTHHIQVRKVQN.

K(+) contacts are provided by Asp-14 and Thr-15. Residue Arg-21 participates in ATP binding. Glu-165 contacts Mg(2+). Substrate contacts are provided by Gly-188, Asp-189, and Thr-221. Mg(2+) is bound at residue Asp-189.

This sequence belongs to the pyruvate kinase family. Requires Mg(2+) as cofactor. K(+) serves as cofactor. Expressed in developing and germinating endosperm and in roots.

Its subcellular location is the plastid. The protein resides in the chloroplast. It catalyses the reaction pyruvate + ATP = phosphoenolpyruvate + ADP + H(+). It functions in the pathway carbohydrate degradation; glycolysis; pyruvate from D-glyceraldehyde 3-phosphate: step 5/5. This chain is Pyruvate kinase isozyme G, chloroplastic, found in Ricinus communis (Castor bean).